The primary structure comprises 371 residues: tRNA-specific 2-thiouridylase MnmA (371 aa).

ATP is bound by residues 14–21 (GMSGGVDS) and Met-40. The interaction with target base in tRNA stretch occupies residues 100–102 (NPD). Cys-105 (nucleophile) is an active-site residue. An intrachain disulfide couples Cys-105 to Cys-205. Gly-129 is a binding site for ATP. The tract at residues 155 to 157 (KDQ) is interaction with tRNA. Cys-205 serves as the catalytic Cysteine persulfide intermediate. Residues 321–322 (RY) are interaction with tRNA.

It belongs to the MnmA/TRMU family.

The protein resides in the cytoplasm. The enzyme catalyses S-sulfanyl-L-cysteinyl-[protein] + uridine(34) in tRNA + AH2 + ATP = 2-thiouridine(34) in tRNA + L-cysteinyl-[protein] + A + AMP + diphosphate + H(+). Its function is as follows. Catalyzes the 2-thiolation of uridine at the wobble position (U34) of tRNA, leading to the formation of s(2)U34. The polypeptide is tRNA-specific 2-thiouridylase MnmA (Bordetella parapertussis (strain 12822 / ATCC BAA-587 / NCTC 13253)).